Consider the following 657-residue polypeptide: Major core protein 4b (657 aa).

The propeptide occupies 1 to 61 (MESDSNIAIE…ITEEDVISAG (61 aa)).

Belongs to the poxviridae protein P4b family. The precursor is cleaved to a mature protein during virion maturation. Proteolytic cleavage of major core proteins P4a (A10L), P4b (A3L), and VP8 (L4R), which occurs at a late stage of core formation, is required for production of infectious mature virions (MV).

The protein resides in the virion. Major component of the virion core that undergoes proteolytic processing during the immature virion (IV) to mature virion (MV) transition. Essential for the formation of a structurally normal core. The polypeptide is Major core protein 4b (Vertebrata (FPV)).